A 258-amino-acid chain; its full sequence is UPF0246 protein YaaA (258 aa).

The protein belongs to the UPF0246 family.

This chain is UPF0246 protein YaaA, found in Escherichia coli (strain UTI89 / UPEC).